A 228-amino-acid polypeptide reads, in one-letter code: Small ribosomal subunit protein uS3 (228 aa).

Residues 39–107 enclose the KH type-2 domain; it reads VREFIRERLK…PVHINIEEIR (69 aa).

The protein belongs to the universal ribosomal protein uS3 family. As to quaternary structure, part of the 30S ribosomal subunit. Forms a tight complex with proteins S10 and S14.

In terms of biological role, binds the lower part of the 30S subunit head. Binds mRNA in the 70S ribosome, positioning it for translation. This chain is Small ribosomal subunit protein uS3, found in Halorhodospira halophila (strain DSM 244 / SL1) (Ectothiorhodospira halophila (strain DSM 244 / SL1)).